Consider the following 451-residue polypeptide: Phosphoglucosamine mutase (451 aa).

S102 acts as the Phosphoserine intermediate in catalysis. S102, D243, D245, and D247 together coordinate Mg(2+). S102 bears the Phosphoserine mark.

Belongs to the phosphohexose mutase family. The cofactor is Mg(2+). In terms of processing, activated by phosphorylation.

It carries out the reaction alpha-D-glucosamine 1-phosphate = D-glucosamine 6-phosphate. Catalyzes the conversion of glucosamine-6-phosphate to glucosamine-1-phosphate. The chain is Phosphoglucosamine mutase from Salinispora tropica (strain ATCC BAA-916 / DSM 44818 / JCM 13857 / NBRC 105044 / CNB-440).